Reading from the N-terminus, the 224-residue chain is Cysteine-rich hydrophobic domain-containing protein 1 (224 aa).

The tract at residues 1–80 is disordered; that stretch reads MSILLPNMAE…PPPRVVSEEH (80 aa). A compositionally biased stretch (acidic residues) spans 13 to 25; the sequence is TISELEEEEEEEA. Residues 26–40 show a composition bias toward low complexity; that stretch reads ATSSSSPSSSSSVSG. The segment covering 41 to 69 has biased composition (acidic residues); the sequence is PDDDEEDEEEEEEEEEEEEEEEEEEEEEA. Residues 42 to 70 are a coiled coil; it reads DDDEEDEEEEEEEEEEEEEEEEEEEEEAP.

Belongs to the CHIC family. In terms of processing, palmitoylated. As to expression, equally expressed in various parts of the brain.

It localises to the cell membrane. It is found in the cytoplasmic vesicle. The sequence is that of Cysteine-rich hydrophobic domain-containing protein 1 (CHIC1) from Homo sapiens (Human).